The chain runs to 553 residues: Putative transport protein YidE (553 aa).

The next 5 membrane-spanning stretches (helical) occupy residues 4-24, 28-48, 65-85, 95-115, and 158-178; these read IALTVSILALVAVVGLFIGNV, GIGLGIGGVLFGGIIVGHFVS, FGLILFVYTIGIQVGPGFFAS, LFAVLIVIIGGLVTAILHKLF, and MSYAMAYPFGICGILFTMWML. RCK C-terminal domains follow at residues 191–276 and 279–361; these read QQHE…VIGQ and DTSL…VLGN. A run of 6 helical transmembrane segments spans residues 371 to 391, 393 to 413, 431 to 448, 464 to 484, 493 to 513, and 533 to 553; these read MLPVFIGIGLGVLLGSIPVFV, GFPAALKLGLAGGLLIMALIL, NLALRELGIVLFLSVVGL, LSWIGYGALITAVPLITVGIL, YLTMCGMLAGSMTDPPALAFA, and LVMFLRIITPQLLAVLFWSIG.

Belongs to the AAE transporter (TC 2.A.81) family. YidE subfamily.

It is found in the cell membrane. The sequence is that of Putative transport protein YidE from Shigella sonnei (strain Ss046).